The primary structure comprises 425 residues: Neuromedin-U receptor 1 (425 aa).

Residues 1–59 (MTPPCLNCSFFPGQLSPNASTGLLSCNDSEFKEHFDLEDLNLTHEDLRLKYLGPQQVKQ) are Extracellular-facing. An N-linked (GlcNAc...) asparagine glycan is attached at Asn41. Residues 60–80 (FLPICVTYLLIFVVGTLGNGL) form a helical membrane-spanning segment. Topologically, residues 81–96 (TCTVILRQKAMHTPTN) are cytoplasmic. The chain crosses the membrane as a helical span at residues 97 to 117 (FYLFSLAVSDLLVLLVGLPLE). The Extracellular segment spans residues 118–137 (LYEMQHNYPFQLGAGGCYFR). A disulfide bond links Cys134 and Cys219. The chain crosses the membrane as a helical span at residues 138-158 (ILLLETVCLASVLNVTALSVE). At 159-181 (RYVAVVHPLQAKSVMTRTHVRRM) the chain is on the cytoplasmic side. Residues 182-202 (LGAIWVFAILFSLPNTSLHGL) form a helical membrane-spanning segment. Over 203–235 (SPLYVPCRGPVPDSVTCTLVRPQFFYKLVIQTT) the chain is Extracellular. A helical membrane pass occupies residues 236 to 256 (ILLFFCLPMVTISVLYLLIGL). At 257 to 294 (RLRRERILLQEEVKGRISAAARQASHRSIQLRDRERRQ) the chain is on the cytoplasmic side. The helical transmembrane segment at 295-315 (VTKMLIALVIVFGTCWVPFHA) threads the bilayer. Over 316-331 (DRLMWSMVSHWTDGLR) the chain is Extracellular. Residues 332–352 (LAFQSVHLASGVFLYLGSAAN) form a helical membrane-spanning segment. Topologically, residues 353 to 425 (PVLYNLMSTR…GCEQETDPPE (73 aa)) are cytoplasmic. The disordered stretch occupies residues 406-425 (DVPLAENRDPGCEQETDPPE).

Belongs to the G-protein coupled receptor 1 family. In terms of tissue distribution, highly expressed in the small intestine and lung. Low expression in the central nervous system.

It is found in the cell membrane. Its function is as follows. Receptor for the neuromedin-U and neuromedin-S neuropeptides. This chain is Neuromedin-U receptor 1 (Nmur1), found in Rattus norvegicus (Rat).